The following is a 465-amino-acid chain: Iron-sulfur cluster assembly SufBD family protein SSP1857 (465 aa).

It belongs to the iron-sulfur cluster assembly SufBD family.

The chain is Iron-sulfur cluster assembly SufBD family protein SSP1857 from Staphylococcus saprophyticus subsp. saprophyticus (strain ATCC 15305 / DSM 20229 / NCIMB 8711 / NCTC 7292 / S-41).